Consider the following 519-residue polypeptide: Histidine--tRNA ligase (519 aa).

This sequence belongs to the class-II aminoacyl-tRNA synthetase family. As to quaternary structure, homodimer.

The protein resides in the cytoplasm. The enzyme catalyses tRNA(His) + L-histidine + ATP = L-histidyl-tRNA(His) + AMP + diphosphate + H(+). The polypeptide is Histidine--tRNA ligase (Roseobacter denitrificans (strain ATCC 33942 / OCh 114) (Erythrobacter sp. (strain OCh 114))).